The sequence spans 184 residues: Shikimate kinase (184 aa).

An ATP-binding site is contributed by 12–17 (GSGKST). Mg(2+) is bound at residue Ser-16. Positions 34, 58, and 80 each coordinate substrate. An ATP-binding site is contributed by Arg-117. Substrate is bound at residue Arg-136. Residue Arg-153 coordinates ATP. A disordered region spans residues 164 to 184 (SRLDDPTPNTSPSSTASGAAT). Positions 169–184 (PTPNTSPSSTASGAAT) are enriched in low complexity.

The protein belongs to the shikimate kinase family. As to quaternary structure, monomer. Mg(2+) is required as a cofactor.

Its subcellular location is the cytoplasm. It catalyses the reaction shikimate + ATP = 3-phosphoshikimate + ADP + H(+). It functions in the pathway metabolic intermediate biosynthesis; chorismate biosynthesis; chorismate from D-erythrose 4-phosphate and phosphoenolpyruvate: step 5/7. In terms of biological role, catalyzes the specific phosphorylation of the 3-hydroxyl group of shikimic acid using ATP as a cosubstrate. In Mycobacterium ulcerans (strain Agy99), this protein is Shikimate kinase.